Consider the following 621-residue polypeptide: Rab proteins geranylgeranyltransferase component A 2 (621 aa).

The disordered stretch occupies residues 113-171; sequence VQDTETLQRSSPLEASATPADSLDSASLPKERQSAYSTSYEVPSRHTEESDRELSLPSA. Over residues 115–125 the composition is skewed to polar residues; sequence DTETLQRSSPL. Residues 155 to 166 are compositionally biased toward basic and acidic residues; that stretch reads PSRHTEESDREL.

It belongs to the Rab GDI family. Monomer. Heterotrimer composed of RABGGTA, RABGGTB and CHML; within this trimer, RABGGTA and RABGGTB form the catalytic component B, while CHML (component A) mediates Rab protein binding. Interacts with RAB1A, RAB7A and RAB27A, but has much lower affinity for RAB1A, RAB7A and RAB27A than CHM. Interacts with the non-phosphorylated forms of RAB3A, RAB3B, RAB3C, RAB3D, RAB5B, RAB5C, RAB8A, RAB8B, RAB10, RAB12, RAB35, and RAB43.

The protein resides in the cytoplasm. It is found in the cytosol. Substrate-binding subunit (component A) of the Rab geranylgeranyltransferase (GGTase) complex. Binds unprenylated Rab proteins and presents the substrate peptide to the catalytic component B. The component A is thought to be regenerated by transferring its prenylated Rab back to the donor membrane. Less effective than CHM in supporting prenylation of Rab3 family. The polypeptide is Rab proteins geranylgeranyltransferase component A 2 (Chml) (Mus musculus (Mouse)).